Reading from the N-terminus, the 207-residue chain is Small ribosomal subunit protein uS4 (207 aa).

Residues 31–56 are disordered; that stretch reads KCKLDSKPGQHGRTSGARTSDYGNQL. Positions 42-53 are enriched in polar residues; that stretch reads GRTSGARTSDYG. An S4 RNA-binding domain is found at 97 to 157; sequence TRLDNVVYRM…EKSKKQVRIV (61 aa).

The protein belongs to the universal ribosomal protein uS4 family. In terms of assembly, part of the 30S ribosomal subunit. Contacts protein S5. The interaction surface between S4 and S5 is involved in control of translational fidelity.

Its function is as follows. One of the primary rRNA binding proteins, it binds directly to 16S rRNA where it nucleates assembly of the body of the 30S subunit. With S5 and S12 plays an important role in translational accuracy. The sequence is that of Small ribosomal subunit protein uS4 from Herminiimonas arsenicoxydans.